The chain runs to 177 residues: Large ribosomal subunit protein uL6 (177 aa).

This sequence belongs to the universal ribosomal protein uL6 family. In terms of assembly, part of the 50S ribosomal subunit.

Its function is as follows. This protein binds to the 23S rRNA, and is important in its secondary structure. It is located near the subunit interface in the base of the L7/L12 stalk, and near the tRNA binding site of the peptidyltransferase center. This Chromobacterium violaceum (strain ATCC 12472 / DSM 30191 / JCM 1249 / CCUG 213 / NBRC 12614 / NCIMB 9131 / NCTC 9757 / MK) protein is Large ribosomal subunit protein uL6.